A 199-amino-acid polypeptide reads, in one-letter code: ATP-dependent Clp protease proteolytic subunit (199 aa).

Catalysis depends on S97, which acts as the Nucleophile. H122 is a catalytic residue.

Belongs to the peptidase S14 family. In terms of assembly, fourteen ClpP subunits assemble into 2 heptameric rings which stack back to back to give a disk-like structure with a central cavity, resembling the structure of eukaryotic proteasomes.

The protein resides in the cytoplasm. The enzyme catalyses Hydrolysis of proteins to small peptides in the presence of ATP and magnesium. alpha-casein is the usual test substrate. In the absence of ATP, only oligopeptides shorter than five residues are hydrolyzed (such as succinyl-Leu-Tyr-|-NHMec, and Leu-Tyr-Leu-|-Tyr-Trp, in which cleavage of the -Tyr-|-Leu- and -Tyr-|-Trp bonds also occurs).. Functionally, cleaves peptides in various proteins in a process that requires ATP hydrolysis. Has a chymotrypsin-like activity. Plays a major role in the degradation of misfolded proteins. The chain is ATP-dependent Clp protease proteolytic subunit from Geobacter metallireducens (strain ATCC 53774 / DSM 7210 / GS-15).